The following is a 356-amino-acid chain: Galactosylgalactosylxylosylprotein 3-beta-glucuronosyltransferase sqv-8 (356 aa).

At Met1 to Lys9 the chain is on the cytoplasmic side. The helical; Signal-anchor for type II membrane protein transmembrane segment at Trp10–Ile30 threads the bilayer. The Lumenal segment spans residues Asn31–Asn356. Residues Asn93 and Asn173 are each glycosylated (N-linked (GlcNAc...) asparagine). Asp208 serves as a coordination point for Mn(2+). 2 N-linked (GlcNAc...) asparagine glycosylation sites follow: Asn246 and Asn272. Glu294 (proton acceptor) is an active-site residue.

Belongs to the glycosyltransferase 43 family.

It is found in the membrane. It carries out the reaction 3-O-(beta-D-galactosyl-(1-&gt;3)-beta-D-galactosyl-(1-&gt;4)-beta-D-xylosyl)-L-seryl-[protein] + UDP-alpha-D-glucuronate = 3-O-(beta-D-GlcA-(1-&gt;3)-beta-D-Gal-(1-&gt;3)-beta-D-Gal-(1-&gt;4)-beta-D-Xyl)-L-seryl-[protein] + UDP + H(+). Functionally, glycosyltransferase required for the biosynthesis of the tetrasaccharide (GlcA-Gal-Gal-Xyl-)Ser core linker of heparan sulfate and chondroitin sulfate. May be involved in the biosynthesis of the HNK-1 carbohydrate epitope on glycoproteins. Required for embryonic development. Involved in the elongation of the pharyngeal isthmus during the later stages of embryonic development. Involved in vulval epithelium invagination. The polypeptide is Galactosylgalactosylxylosylprotein 3-beta-glucuronosyltransferase sqv-8 (sqv-8) (Caenorhabditis elegans).